The primary structure comprises 324 residues: Meiotic recombination protein DLH1 (324 aa).

Residue 112–119 (GEFRCGKT) coordinates ATP. DsDNA is bound at residue Arg-214. Positions 214, 217, 220, 226, and 296 each coordinate ssDNA. Residues Arg-220 and Arg-226 each coordinate dsDNA.

This sequence belongs to the RecA family. DMC1 subfamily. In terms of assembly, double stacked ring-shaped homooctamer.

It localises to the nucleus. Functionally, required for meiotic recombination, synaptonemal complex formation and cell cycle progression. The polypeptide is Meiotic recombination protein DLH1 (DLH1) (Candida albicans (Yeast)).